Reading from the N-terminus, the 272-residue chain is Indole-3-glycerol phosphate synthase (272 aa).

Belongs to the TrpC family.

The catalysed reaction is 1-(2-carboxyphenylamino)-1-deoxy-D-ribulose 5-phosphate + H(+) = (1S,2R)-1-C-(indol-3-yl)glycerol 3-phosphate + CO2 + H2O. It functions in the pathway amino-acid biosynthesis; L-tryptophan biosynthesis; L-tryptophan from chorismate: step 4/5. The chain is Indole-3-glycerol phosphate synthase (trpC) from Mycobacterium tuberculosis (strain CDC 1551 / Oshkosh).